A 214-amino-acid chain; its full sequence is MVAAVRVIGGETPLARYVLKVLRDRTTGFPEFRRYVRIAGSILAVYIAGELGWVEEEVETPLGAKAKELAPAGPVYLVGILGASLPMVEGFASMMPEARIALVAARRVEEPGRLKIEVYYSRLPRMFDGPAVVLDPMLATGKTVAEAVRLARDRGASKVVIGSIIASRQGVEYISSLYGDTPIYTLALDPELDENYFIVPGLGDAGDRALGVEP.

5-phospho-alpha-D-ribose 1-diphosphate contacts are provided by residues R107 and 135–143 (DPMLATGKT). Uracil is bound by residues I198 and 203 to 205 (GDA). D204 is a binding site for 5-phospho-alpha-D-ribose 1-diphosphate.

Belongs to the UPRTase family. Mg(2+) serves as cofactor.

The catalysed reaction is UMP + diphosphate = 5-phospho-alpha-D-ribose 1-diphosphate + uracil. It participates in pyrimidine metabolism; UMP biosynthesis via salvage pathway; UMP from uracil: step 1/1. Allosterically activated by GTP. Catalyzes the conversion of uracil and 5-phospho-alpha-D-ribose 1-diphosphate (PRPP) to UMP and diphosphate. This is Uracil phosphoribosyltransferase from Aeropyrum pernix (strain ATCC 700893 / DSM 11879 / JCM 9820 / NBRC 100138 / K1).